We begin with the raw amino-acid sequence, 137 residues long: Small ribosomal subunit protein uS12 (137 aa).

The segment at Met-1–Lys-57 is disordered. Residues Lys-32 to Pro-41 are compositionally biased toward polar residues. The residue at position 102 (Asp-102) is a 3-methylthioaspartic acid.

Belongs to the universal ribosomal protein uS12 family. Part of the 30S ribosomal subunit. Contacts proteins S8 and S17. May interact with IF1 in the 30S initiation complex.

In terms of biological role, with S4 and S5 plays an important role in translational accuracy. Its function is as follows. Interacts with and stabilizes bases of the 16S rRNA that are involved in tRNA selection in the A site and with the mRNA backbone. Located at the interface of the 30S and 50S subunits, it traverses the body of the 30S subunit contacting proteins on the other side and probably holding the rRNA structure together. The combined cluster of proteins S8, S12 and S17 appears to hold together the shoulder and platform of the 30S subunit. The polypeptide is Small ribosomal subunit protein uS12 (Ligilactobacillus salivarius (strain UCC118) (Lactobacillus salivarius)).